A 689-amino-acid chain; its full sequence is Glycine--tRNA ligase beta subunit (689 aa).

This sequence belongs to the class-II aminoacyl-tRNA synthetase family. As to quaternary structure, tetramer of two alpha and two beta subunits.

Its subcellular location is the cytoplasm. The catalysed reaction is tRNA(Gly) + glycine + ATP = glycyl-tRNA(Gly) + AMP + diphosphate. The polypeptide is Glycine--tRNA ligase beta subunit (Salmonella choleraesuis (strain SC-B67)).